Reading from the N-terminus, the 329-residue chain is Delta-aminolevulinic acid dehydratase (329 aa).

Residues Cys122, Cys124, and Cys132 each contribute to the Zn(2+) site. Lys199 functions as the Schiff-base intermediate with substrate in the catalytic mechanism. The 5-aminolevulinate site is built by Arg209 and Arg221. Catalysis depends on Lys252, which acts as the Schiff-base intermediate with substrate. The 5-aminolevulinate site is built by Ser279 and Tyr318.

It belongs to the ALAD family. Homooctamer. It depends on Zn(2+) as a cofactor.

The enzyme catalyses 2 5-aminolevulinate = porphobilinogen + 2 H2O + H(+). It participates in porphyrin-containing compound metabolism; protoporphyrin-IX biosynthesis; coproporphyrinogen-III from 5-aminolevulinate: step 1/4. Catalyzes an early step in the biosynthesis of tetrapyrroles. Binds two molecules of 5-aminolevulinate per subunit, each at a distinct site, and catalyzes their condensation to form porphobilinogen. The chain is Delta-aminolevulinic acid dehydratase (hem2) from Schizosaccharomyces pombe (strain 972 / ATCC 24843) (Fission yeast).